We begin with the raw amino-acid sequence, 1244 residues long: SWI/SNF chromatin remodeling complex subunit swsn-7 (1244 aa).

Residues 24–116 enclose the ARID domain; it reads QRKMAEFYNS…YLSKFEQVET (93 aa). Polar residues predominate over residues 486–496; it reads FTQGSNQQQNP. Disordered stretches follow at residues 486–534, 556–583, and 597–619; these read FTQG…GAAP, NREQYSTQSSQPHPPHTNVPPSPSILAH, and DRRTGNLPVRPIAPSTNSGESQL. Residues 497 to 508 are compositionally biased toward low complexity; the sequence is HHSQGGHQLGHS. The segment covering 556–566 has biased composition (polar residues); sequence NREQYSTQSSQ. The segment covering 567–578 has biased composition (pro residues); that stretch reads PHPPHTNVPPSP. The span at 610–619 shows a compositional bias: polar residues; it reads PSTNSGESQL. Positions 623–697 form a DNA-binding region, RFX-type winged-helix; it reads TEKWIRQNCV…IVAQGIRLIR (75 aa). Residues 1134–1244 form a disordered region; sequence EEEQQKMLSE…TTPVRAGAGI (111 aa). The segment covering 1142 to 1158 has biased composition (low complexity); sequence SEVPSSASLSSMAGSSS. Composition is skewed to polar residues over residues 1159 to 1186 and 1194 to 1212; these read QLPTVPDSPTSSVASAPMKESTSVSNKP and LNFSSLNEKTPTSPQFTAG. A compositionally biased stretch (low complexity) spans 1220–1231; the sequence is PIQQHIPSQPSP.

In terms of assembly, component of the SWI/SNF-B (PBAF) chromatin remodeling complex.

The protein localises to the nucleus. Functionally, involved in transcriptional activation and repression of select genes by chromatin remodeling (alteration of DNA-nucleosome topology). Required for the stability of the SWI/SNF chromatin remodeling complex SWI/SNF-B (PBAF). Required for regulation of a stress response gene network, probably as part of the PBAF complex and perhaps acting in concert with histone demethylase jmjc-1. Binds to the ethanol and stress response elements (ESRE) in the promoter regions of hsp-16.1 and hsp-16.2, probably as part of the PBAF complex. This is SWI/SNF chromatin remodeling complex subunit swsn-7 from Caenorhabditis elegans.